Consider the following 202-residue polypeptide: Holliday junction branch migration complex subunit RuvA (202 aa).

Positions 1 to 62 (MIGYLRGRLH…EDAMELYGFT (62 aa)) are domain I. Positions 63–141 (RPEELHLFTL…KSGLVDGTET (79 aa)) are domain II. The tract at residues 141-145 (TEAIP) is flexible linker. The tract at residues 146 to 202 (AGGGDNDEALAALLALGYSREEIGPILARVRQELGNAAPTTAVLQAVLKTFGRGGGD) is domain III.

The protein belongs to the RuvA family. Homotetramer. Forms an RuvA(8)-RuvB(12)-Holliday junction (HJ) complex. HJ DNA is sandwiched between 2 RuvA tetramers; dsDNA enters through RuvA and exits via RuvB. An RuvB hexamer assembles on each DNA strand where it exits the tetramer. Each RuvB hexamer is contacted by two RuvA subunits (via domain III) on 2 adjacent RuvB subunits; this complex drives branch migration. In the full resolvosome a probable DNA-RuvA(4)-RuvB(12)-RuvC(2) complex forms which resolves the HJ.

Its subcellular location is the cytoplasm. Functionally, the RuvA-RuvB-RuvC complex processes Holliday junction (HJ) DNA during genetic recombination and DNA repair, while the RuvA-RuvB complex plays an important role in the rescue of blocked DNA replication forks via replication fork reversal (RFR). RuvA specifically binds to HJ cruciform DNA, conferring on it an open structure. The RuvB hexamer acts as an ATP-dependent pump, pulling dsDNA into and through the RuvAB complex. HJ branch migration allows RuvC to scan DNA until it finds its consensus sequence, where it cleaves and resolves the cruciform DNA. The chain is Holliday junction branch migration complex subunit RuvA from Moorella thermoacetica (strain ATCC 39073 / JCM 9320).